Consider the following 402-residue polypeptide: Tyrosine--tRNA ligase (402 aa).

The 'HIGH' region motif lies at 48 to 57; sequence PSRPDLHLGH. Residues 232–236 carry the 'KMSKS' region motif; sequence KMSKS. ATP is bound at residue lysine 235. The S4 RNA-binding domain occupies 339–402; it reads MPIIDLLTLL…KRKFFKIRSK (64 aa).

The protein belongs to the class-I aminoacyl-tRNA synthetase family. TyrS type 2 subfamily. In terms of assembly, homodimer.

Its subcellular location is the cytoplasm. It carries out the reaction tRNA(Tyr) + L-tyrosine + ATP = L-tyrosyl-tRNA(Tyr) + AMP + diphosphate + H(+). Catalyzes the attachment of tyrosine to tRNA(Tyr) in a two-step reaction: tyrosine is first activated by ATP to form Tyr-AMP and then transferred to the acceptor end of tRNA(Tyr). The polypeptide is Tyrosine--tRNA ligase (Chlorobium chlorochromatii (strain CaD3)).